We begin with the raw amino-acid sequence, 305 residues long: Probable xyloglucan endotransglucosylase/hydrolase protein 8 (305 aa).

An N-terminal signal peptide occupies residues 1-31 (METERRIITSCSAMTALFLFMTALMASSSIA). A GH16 domain is found at 32–231 (ATPTQSFEDN…WKKAPFVSSY (200 aa)). N-linked (GlcNAc...) asparagine glycans are attached at residues N61 and N66. E115 serves as the catalytic Nucleophile. E119 (proton donor) is an active-site residue. Residue E119 coordinates xyloglucan. A glycan (N-linked (GlcNAc...) asparagine) is linked at N123. A xyloglucan-binding site is contributed by 132 to 134 (QTN). A glycan (N-linked (GlcNAc...) asparagine) is linked at N138. Residues 142–144 (NRE), 210–211 (DW), and G215 each bind xyloglucan. Intrachain disulfides connect C239–C248 and C286–C299. A xyloglucan-binding site is contributed by R291.

The protein belongs to the glycosyl hydrolase 16 family. XTH group 1 subfamily. In terms of processing, contains at least one intrachain disulfide bond essential for its enzymatic activity.

The protein resides in the secreted. It localises to the cell wall. Its subcellular location is the extracellular space. It is found in the apoplast. It carries out the reaction breaks a beta-(1-&gt;4) bond in the backbone of a xyloglucan and transfers the xyloglucanyl segment on to O-4 of the non-reducing terminal glucose residue of an acceptor, which can be a xyloglucan or an oligosaccharide of xyloglucan.. Catalyzes xyloglucan endohydrolysis (XEH) and/or endotransglycosylation (XET). Cleaves and religates xyloglucan polymers, an essential constituent of the primary cell wall, and thereby participates in cell wall construction of growing tissues. This is Probable xyloglucan endotransglucosylase/hydrolase protein 8 (XTH8) from Arabidopsis thaliana (Mouse-ear cress).